We begin with the raw amino-acid sequence, 352 residues long: Protein RecA (352 aa).

64 to 71 (GPESSGKT) contacts ATP. Positions 328 to 352 (NPSSVPEAEAEHDPEQDEEPTFDLE) are disordered. Residues 335-352 (AEAEHDPEQDEEPTFDLE) show a composition bias toward acidic residues.

The protein belongs to the RecA family.

Its subcellular location is the cytoplasm. Functionally, can catalyze the hydrolysis of ATP in the presence of single-stranded DNA, the ATP-dependent uptake of single-stranded DNA by duplex DNA, and the ATP-dependent hybridization of homologous single-stranded DNAs. It interacts with LexA causing its activation and leading to its autocatalytic cleavage. The chain is Protein RecA from Brevibacillus brevis (strain 47 / JCM 6285 / NBRC 100599).